The primary structure comprises 1287 residues: Pullulanase A (1287 aa).

An N-terminal signal peptide occupies residues M1–S44. Residues I42–P139 are disordered. The segment covering T48–T61 has biased composition (low complexity). Residues D79–L90 show a composition bias toward polar residues. Composition is skewed to low complexity over residues T99 to P113 and E122 to E133. Substrate contacts are provided by residues W163 to W165, W175, D221, W270 to W272, W283, K325, and N330. Residues S668 and Y670 each coordinate Ca(2+). Substrate-binding positions include Y674 to D675 and F750. The active-site Nucleophile is D785. The Proton donor role is filled by E814. Residue W816 participates in substrate binding. Ca(2+)-binding residues include M835, T838, and D839. Positions 846, 849, and 856 each coordinate substrate. Residues D889 and D893 each coordinate Ca(2+). Substrate contacts are provided by residues N903, K976, and D996–Y998. D999 contributes to the Ca(2+) binding site. Positions V1147–N1255 are disordered. The segment covering S1156–N1203 has biased composition (basic and acidic residues). The segment covering S1212–S1225 has biased composition (low complexity). Over residues E1228 to S1239 the composition is skewed to basic and acidic residues. The LPXTG sorting signal signature appears at L1253–G1257. T1256 bears the Pentaglycyl murein peptidoglycan amidated threonine mark. Positions G1257–N1287 are cleaved as a propeptide — removed by sortase.

This sequence belongs to the glycosyl hydrolase 13 family.

Its subcellular location is the secreted. It localises to the cell wall. The protein resides in the cell surface. The catalysed reaction is Hydrolysis of (1-&gt;6)-alpha-D-glucosidic linkages in pullulan, amylopectin and glycogen, and in the alpha- and beta-limit dextrins of amylopectin and glycogen.. Inhibited by 4-O-alpha-D-glucopyranosylmoranoline (G1M). In terms of biological role, virulence factor. Involved in the degradation of glycogen of the mammalian host cells. Hydrolyzes the alpha-1,6-branchpoints of glycogen. Hydrolyzes pullulan. Does not hydrolyze dextran. Binds to mouse lung alveolar type II cells that are rich in glycogen stores. Is an alpha-glucan-specific carbohydrate-binding protein, which binds to amylose (pure alpha-(1,4)-linked glucose), amylopectin (alpha-(1,4)-linked glucose with alpha-(1,6) branch points), pullulan (linear polymer of mixed alpha-(1,4)- and alpha-(1,6)-linked glucose) and glycogen (similar to amylopectin with more frequent alpha-(1,6) branch points) in vitro. Does not bind to dextran (a linear polymer of alpha-(1,6)-linked glucose). The chain is Pullulanase A from Streptococcus pneumoniae.